The chain runs to 240 residues: Bactofilin BacP (240 aa).

Positions 116-240 (DVEPGRLPAE…KKVVVKKKTR (125 aa)) are interacts with PadC. The disordered stretch occupies residues 117–240 (VEPGRLPAER…KKVVVKKKTR (124 aa)). Low complexity predominate over residues 126–150 (RPAVVRPTAVTRPTATPARPTIPAA). The segment covering 151–173 (RPMPPPPPSRPTPPPPPARPSAP) has biased composition (pro residues). The span at 229–240 (AKKKVVVKKKTR) shows a compositional bias: basic residues.

The protein belongs to the bactofilin family. As to quaternary structure, interacts with BacN and probably also BacO, the 3 proteins colocalize as an extended structure. Interacts with PadC.

It is found in the cytoplasm. The protein localises to the cytoskeleton. A non-essential component of the chromosome segregation machinery. Positions the ParA-ParB-parS chromosome segregation machinery within the cell; BacP seems to be the most important bactofilin in this process. Forms a heteropolymeric, subpolar scaffold in the cell; BacP probably forms the core, BacO contributes to position and integrity while BacN does not seem to contribute to assembly. This chain is Bactofilin BacP, found in Myxococcus xanthus (strain DK1622).